Consider the following 577-residue polypeptide: Arginine--tRNA ligase (577 aa).

Residues 124–132 (VAKEMHVGH) carry the 'HIGH' region motif.

It belongs to the class-I aminoacyl-tRNA synthetase family. Monomer.

It is found in the cytoplasm. The enzyme catalyses tRNA(Arg) + L-arginine + ATP = L-arginyl-tRNA(Arg) + AMP + diphosphate. The polypeptide is Arginine--tRNA ligase (Salmonella typhi).